The following is a 379-amino-acid chain: Arginine biosynthesis bifunctional protein ArgJ (379 aa).

The substrate site is built by threonine 140, lysine 160, threonine 171, glutamate 249, asparagine 374, and threonine 379. The active-site Nucleophile is threonine 171.

It belongs to the ArgJ family. As to quaternary structure, heterotetramer of two alpha and two beta chains.

It is found in the cytoplasm. The catalysed reaction is N(2)-acetyl-L-ornithine + L-glutamate = N-acetyl-L-glutamate + L-ornithine. The enzyme catalyses L-glutamate + acetyl-CoA = N-acetyl-L-glutamate + CoA + H(+). Its pathway is amino-acid biosynthesis; L-arginine biosynthesis; L-ornithine and N-acetyl-L-glutamate from L-glutamate and N(2)-acetyl-L-ornithine (cyclic): step 1/1. It participates in amino-acid biosynthesis; L-arginine biosynthesis; N(2)-acetyl-L-ornithine from L-glutamate: step 1/4. Its function is as follows. Catalyzes two activities which are involved in the cyclic version of arginine biosynthesis: the synthesis of N-acetylglutamate from glutamate and acetyl-CoA as the acetyl donor, and of ornithine by transacetylation between N(2)-acetylornithine and glutamate. The chain is Arginine biosynthesis bifunctional protein ArgJ from Archaeoglobus fulgidus (strain ATCC 49558 / DSM 4304 / JCM 9628 / NBRC 100126 / VC-16).